A 149-amino-acid polypeptide reads, in one-letter code: UPF0178 protein SERP0336 (149 aa).

This sequence belongs to the UPF0178 family.

The chain is UPF0178 protein SERP0336 from Staphylococcus epidermidis (strain ATCC 35984 / DSM 28319 / BCRC 17069 / CCUG 31568 / BM 3577 / RP62A).